The following is a 101-amino-acid chain: Apolipoprotein C-II (101 aa).

Positions 1–22 (MGIRYLLVLVLVLLVLGCEVQG) are cleaved as a signal peptide. Residues 66–74 (TMDEKIREI) are lipid binding. The lipoprotein lipase cofactor stretch occupies residues 78 to 101 (STAAVSTYAGIFTDQLLSMLKGDQ).

It belongs to the apolipoprotein C2 family. Proapolipoprotein C-II is synthesized as a sialic acid containing glycoprotein which is subsequently desialylated prior to its proteolytic processing. Post-translationally, proapolipoprotein C-II, the major form found in plasma undergoes proteolytic cleavage of its N-terminal hexapeptide to generate apolipoprotein C-II, which occurs as the minor form in plasma.

The protein localises to the secreted. In terms of biological role, component of chylomicrons, very low-density lipoproteins (VLDL), low-density lipoproteins (LDL), and high-density lipoproteins (HDL) in plasma. Plays an important role in lipoprotein metabolism as an activator of lipoprotein lipase. Both proapolipoprotein C-II and apolipoprotein C-II can activate lipoprotein lipase. This is Apolipoprotein C-II (APOC2) from Leptonychotes weddellii (Weddell seal).